The following is an 82-amino-acid chain: Progonadoliberin-3 (82 aa).

Positions Met-1–Ser-23 are cleaved as a signal peptide. Gln-24 carries the pyrrolidone carboxylic acid modification. Gly-33 bears the Glycine amide mark.

It belongs to the GnRH family.

The protein resides in the secreted. Its function is as follows. Stimulates the secretion of gonadotropins. The polypeptide is Progonadoliberin-3 (gnrh3) (Salmo trutta (Brown trout)).